A 419-amino-acid polypeptide reads, in one-letter code: MNKKVTLHDQDIADLINKESHRQEEHIELIASENYVSEDVMKAAGSSLTNKYGEGYPGKRYYGGCEFVDEIEKIAQERACKLFNAKYANVQPYSGSVANAAIYMALLNPGDSVLGLSLDSGGHLTHGYRISFSGIFYKSYTYTVNQDGVLDYDEILKIAQEVKPKMIICGYSAYSQIVDFAKFREIADAVGAYLFADIAHISGLVIANLHPSPMGYADVVATTTHKTLRGTRGAIILTNNEEIAKKIDRAVFPGNQGGPLFHQIAAKAVSFYEALQPEFIEYQRQIILNCKVFCQTFINKGVRVISGMTKNHLFTIDVKTSYNLTGKQAEQILSKMNITVNKNTIPFDTESPMVSSGIRLGVAAMTSRDFKEDEFIILANLIDKALREPNNETLHQVIKKEIAKLSHSFPIKRNYLDKK.

(6S)-5,6,7,8-tetrahydrofolate-binding positions include Leu118 and 122–124 (GHL). Residue Lys226 is modified to N6-(pyridoxal phosphate)lysine. (6S)-5,6,7,8-tetrahydrofolate is bound at residue Glu242.

It belongs to the SHMT family. In terms of assembly, homodimer. Pyridoxal 5'-phosphate is required as a cofactor.

Its subcellular location is the cytoplasm. The enzyme catalyses (6R)-5,10-methylene-5,6,7,8-tetrahydrofolate + glycine + H2O = (6S)-5,6,7,8-tetrahydrofolate + L-serine. It functions in the pathway one-carbon metabolism; tetrahydrofolate interconversion. Its pathway is amino-acid biosynthesis; glycine biosynthesis; glycine from L-serine: step 1/1. In terms of biological role, catalyzes the reversible interconversion of serine and glycine with tetrahydrofolate (THF) serving as the one-carbon carrier. This reaction serves as the major source of one-carbon groups required for the biosynthesis of purines, thymidylate, methionine, and other important biomolecules. Also exhibits THF-independent aldolase activity toward beta-hydroxyamino acids, producing glycine and aldehydes, via a retro-aldol mechanism. This chain is Serine hydroxymethyltransferase, found in Metamycoplasma arthritidis (strain 158L3-1) (Mycoplasma arthritidis).